The sequence spans 380 residues: Cytochrome b (380 aa).

The next 4 helical transmembrane spans lie at 34-54 (FGSL…LLAT), 78-99 (WLIR…YLHI), 114-134 (WNTG…GYVL), and 179-199 (FFAL…IHLA). Residues histidine 84 and histidine 98 each contribute to the heme b site. Positions 183 and 197 each coordinate heme b. Histidine 202 serves as a coordination point for a ubiquinone. 4 helical membrane-spanning segments follow: residues 227-247 (LKDI…ALFS), 289-309 (LGGV…PFLH), 321-341 (LSQI…WIGS), and 348-368 (FIII…ILFP).

The protein belongs to the cytochrome b family. The cytochrome bc1 complex contains 11 subunits: 3 respiratory subunits (MT-CYB, CYC1 and UQCRFS1), 2 core proteins (UQCRC1 and UQCRC2) and 6 low-molecular weight proteins (UQCRH/QCR6, UQCRB/QCR7, UQCRQ/QCR8, UQCR10/QCR9, UQCR11/QCR10 and a cleavage product of UQCRFS1). This cytochrome bc1 complex then forms a dimer. Heme b is required as a cofactor.

Its subcellular location is the mitochondrion inner membrane. Component of the ubiquinol-cytochrome c reductase complex (complex III or cytochrome b-c1 complex) that is part of the mitochondrial respiratory chain. The b-c1 complex mediates electron transfer from ubiquinol to cytochrome c. Contributes to the generation of a proton gradient across the mitochondrial membrane that is then used for ATP synthesis. The protein is Cytochrome b (MT-CYB) of Callipepla gambelii (Gambel's quail).